The following is a 333-amino-acid chain: MPATRTPIHPEAAAYKNPRYQSGPLSVIPKSFVPYCELMRLELPHGNFLGYFPHLVGLLYGSSASPARLPANEVAFQAVLYIGWTFFMRGAGCAWNDVVDQDFDRKTTRCRVRPVARGAVSTTSANIFGFAMVALAFACISPLPAECQRLGLMTTVLSIIYPFCKRVTNFAQVILGMTLAINFILAAYGAGLPAIEAPYTVPTICVTTAITLLVVFYDVVYARQDTADDLKSGVKGMAVLFRNYVEILLTSITLVIAGLIATTGVLVDNGPYFFVFSVAGLLAALLAMIGGIRYRIFHTWNSYSGWFYALAIFNLLGGYLIEYLDQVPMLNKA.

Transmembrane regions (helical) follow at residues 74–94, 125–145, 147–164, 173–193, 201–221, 247–267, 272–292, and 304–324; these read VAFQ…AGCA, ANIF…PLPA, CQRL…YPFC, VILG…AGLP, VPTI…DVVY, ILLT…GVLV, YFFV…IGGI, and SGWF…IEYL.

The protein belongs to the UbiA prenyltransferase family.

The protein resides in the membrane. The catalysed reaction is orsellinate + (2E,6E)-farnesyl diphosphate = ilicicolinate B + diphosphate. It functions in the pathway secondary metabolite biosynthesis; terpenoid biosynthesis. Prenyltransferase; part of the cluster that mediates the biosynthesis of LL-Z1272-beta, also known as ilicicolin B, a prenylated aryl-aldehyde produced by several fungi and that serves as a key pathway intermediate for many fungal meroterpenoids. The first step in the pathway is performed by the non-reducing polyketide synthase stbA that produces orsellinic acid by condensing acetyl-CoA with 3 malonyl-CoA units. The prenyltransferase stbC then prenylates orsenilic acid into grifolic acid. Finally, grifolic acid is reduced to ilicicolin B by the NRPS-like protein stbB. The polypeptide is Prenyltransferase stbC (Stachybotrys bisbyi (Hyalostachybotrys bisbyi)).